Here is a 1183-residue protein sequence, read N- to C-terminus: MAGQVVQYGRHRKRRNYARISEVLELPNLIEIQTKSYEWFLREGLIEMFRDISPIEDFTGNLSLEFVDYRLGEPKYDLEESKNRDATYAAPLRVKVRLIIKETGEVKEQEVFMGDFPLMTDTGTFVINGAERVIVSQLVRSPSVYFNEKIDKNGRENYDATIIPNRGAWLEYETDAKDVVYVRIDRTRKLPLTVLLRALGFSSDQEIVDLLGDNEYLRNTLEKDGTENTEQALLEIYERLRPGEPPTVENAKSLLYSRFFDPKRYDLASVGRYKTNKKLHLKHRLFNQKLAEPIVNTETGEIVVEEGTVLDRRKIDEIMDVLESNANSEVFELHGSVIDEPVEIQSIKVYVPNDDEGRTTTVIGNAFPDSEVKCITPADIIASMSYFFNLLSGIGYTDDIDHLGNRRLRSVGELLQNQFRIGLSRMERVVRERMSIQDTESITPQQLINIRPVIASIKEFFGSSQLSQFMDQANPLAELTHKRRLSALGPGGLTRERAQMEVRDVHYSHYGRMCPIETPEGPNIGLINSLSSYARVNEFGFIETPYRKVDLDTHAITDQIDYLTADEEDSYVVAQANSKLDENGRFMDDEVVCRFRGNNTVMAKEKMDYMDVSPKQVVSAATACIPFLENDDSNRALMGANMQRQAVPLMNPEAPFVGTGMEHVAARDSGAAITAKHRGRVEHVESNEILVRRLVEENGVEHEGELDRYPLAKFKRSNSGTCYNQRPIVAVGDVVEFNEILADGPSMELGEMALGRNVVVGFMTWDGYNYEDAVIMSERLVKDDVYTSIHIEEYESEARDTKLGPEEITRDIPNVSESALKNLDDRGIVYIGAEVKDGDILVGKVTPKGVTELTAEERLLHAIFGEKAREVRDTSLRVPHGAGGIVLDVKVFNREEGDDTLSPGVNQLVRVYIVQKRKIHVGDKMCGRHGNKGVISKIVPEEDMPYLPDGRPIDIMLNPLGVPSRMNIGQVLELHLGMAAKNLGIHVASPVFDGANDDDVWSTIEEAGMARDGKTVLYDGRTGEPFDNRISVGVMYMLKLAHMVDDKLHARSTGPYSLVTQQPLGGKAQFGGQRFGEMEVWALEAYGAAYTLQEILTYKSDDTVGRVKTYEAIVKGENISRPSVPESFRVLMKELQSLGLDVKVMDEQDNEIEMTDVDDDDVVERKVDLQQNDAPETQKEVTD.

This sequence belongs to the RNA polymerase beta chain family. In terms of assembly, the RNAP catalytic core consists of 2 alpha, 1 beta, 1 beta' and 1 omega subunit. When a sigma factor is associated with the core the holoenzyme is formed, which can initiate transcription.

It catalyses the reaction RNA(n) + a ribonucleoside 5'-triphosphate = RNA(n+1) + diphosphate. DNA-dependent RNA polymerase catalyzes the transcription of DNA into RNA using the four ribonucleoside triphosphates as substrates. The polypeptide is DNA-directed RNA polymerase subunit beta (Staphylococcus aureus (strain MRSA252)).